The sequence spans 461 residues: Ribitol-5-phosphate transferase FKTN (461 aa).

Over 1-7 (MSRINKN) the chain is Cytoplasmic. The interval 6 to 27 (KNVVLALLTLTSSAFLLFQLYY) is required and sufficient for interaction with POMGNT1. A helical; Signal-anchor for type II membrane protein transmembrane segment spans residues 8–28 (VVLALLTLTSSAFLLFQLYYY). Residues 29–461 (KHYLSARNGP…SEWDEVIQLY (433 aa)) are Lumenal-facing. The N-linked (GlcNAc...) asparagine glycan is linked to N92.

It belongs to the LicD transferase family. In terms of assembly, forms a complex composed of FKTN/fukutin, FKRP and RXYLT1/TMEM5. Interacts (via transmembrane domain) with POMGNT1; the interaction is direct and is required for normal POMGNT1 location in Golgi membranes. In terms of tissue distribution, expressed in the retina, with highest levels found in the inner segments of photoreceptors and the outer plexiform layer (at protein level). Expressed at lower levels in the inner and outer nuclear layers, the inner plexiform layers, and the ganglion cell layers of the retina (at protein level). Expressed in the heart, brain, spleen, lung, liver, skeletal muscle, kidney and testis.

The protein localises to the golgi apparatus membrane. It localises to the cytoplasm. It is found in the nucleus. Its subcellular location is the endoplasmic reticulum. It carries out the reaction 3-O-[beta-D-GalNAc-(1-&gt;3)-beta-D-GlcNAc-(1-&gt;4)-(O-6-P-alpha-D-Man)]-Thr-[protein] + CDP-L-ribitol = 3-O-[Rib-ol-P-3-beta-D-GalNAc-(1-&gt;3)-beta-D-GlcNAc-(1-&gt;4)-(O-6-P-alpha-D-Man)]-Thr-[protein] + CMP + H(+). It participates in protein modification; protein glycosylation. Catalyzes the transfer of CDP-ribitol to the distal N-acetylgalactosamine of the phosphorylated O-mannosyl trisaccharide (N-acetylgalactosamine-beta-3-N-acetylglucosamine-beta-4-(phosphate-6-)mannose), a carbohydrate structure present in alpha-dystroglycan (DAG1). This constitutes the first step in the formation of the ribitol 5-phosphate tandem repeat which links the phosphorylated O-mannosyl trisaccharide to the ligand binding moiety composed of repeats of 3-xylosyl-alpha-1,3-glucuronic acid-beta-1. Required for normal location of POMGNT1 in Golgi membranes, and for normal POMGNT1 activity. May interact with and reinforce a large complex encompassing the outside and inside of muscle membranes. Could be involved in brain development. The sequence is that of Ribitol-5-phosphate transferase FKTN from Mus musculus (Mouse).